The chain runs to 250 residues: GTP cyclohydrolase 1 type 2 homolog (250 aa).

A divalent metal cation-binding residues include His63, His64, Asp100, His218, and Glu222.

This sequence belongs to the GTP cyclohydrolase I type 2/NIF3 family. As to quaternary structure, homohexamer.

The sequence is that of GTP cyclohydrolase 1 type 2 homolog from Pyrococcus abyssi (strain GE5 / Orsay).